The chain runs to 312 residues: Porphobilinogen deaminase (312 aa).

At cysteine 243 the chain carries S-(dipyrrolylmethanemethyl)cysteine.

It belongs to the HMBS family. As to quaternary structure, monomer. Requires dipyrromethane as cofactor.

The enzyme catalyses 4 porphobilinogen + H2O = hydroxymethylbilane + 4 NH4(+). It functions in the pathway porphyrin-containing compound metabolism; protoporphyrin-IX biosynthesis; coproporphyrinogen-III from 5-aminolevulinate: step 2/4. Functionally, tetrapolymerization of the monopyrrole PBG into the hydroxymethylbilane pre-uroporphyrinogen in several discrete steps. In Vibrio vulnificus (strain CMCP6), this protein is Porphobilinogen deaminase.